We begin with the raw amino-acid sequence, 133 residues long: Profilin-3 (133 aa).

The cysteines at positions 13 and 117 are disulfide-linked. Residues 83–99 (AVIRGKKGSGGITIKKT) carry the Involved in PIP2 interaction motif. Position 113 is a phosphothreonine (threonine 113).

The protein belongs to the profilin family. In terms of assembly, occurs in many kinds of cells as a complex with monomeric actin in a 1:1 ratio. Post-translationally, phosphorylated by MAP kinases.

It is found in the cytoplasm. The protein resides in the cytoskeleton. Binds to actin and affects the structure of the cytoskeleton. At high concentrations, profilin prevents the polymerization of actin, whereas it enhances it at low concentrations. The sequence is that of Profilin-3 from Corylus avellana (European hazel).